We begin with the raw amino-acid sequence, 883 residues long: Alanine--tRNA ligase (883 aa).

4 residues coordinate Zn(2+): His563, His567, Cys677, and His681.

It belongs to the class-II aminoacyl-tRNA synthetase family. Zn(2+) serves as cofactor.

It is found in the cytoplasm. It catalyses the reaction tRNA(Ala) + L-alanine + ATP = L-alanyl-tRNA(Ala) + AMP + diphosphate. In terms of biological role, catalyzes the attachment of alanine to tRNA(Ala) in a two-step reaction: alanine is first activated by ATP to form Ala-AMP and then transferred to the acceptor end of tRNA(Ala). Also edits incorrectly charged Ser-tRNA(Ala) and Gly-tRNA(Ala) via its editing domain. This Cereibacter sphaeroides (strain ATCC 17023 / DSM 158 / JCM 6121 / CCUG 31486 / LMG 2827 / NBRC 12203 / NCIMB 8253 / ATH 2.4.1.) (Rhodobacter sphaeroides) protein is Alanine--tRNA ligase.